We begin with the raw amino-acid sequence, 5596 residues long: Midasin (5596 aa).

M1 is subject to N-acetylmethionine. AAA-ATPase protomer regions lie at residues 307–591 (SVCK…TSKL), 659–978 (LIEQ…ASNP), 1048–1316 (KEPT…QEEI), and 1362–1616 (HIVW…NKMG). Position 329 to 336 (329 to 336 (GPIGCGKT)) interacts with ATP. The segment at 517–537 (SSVGCEQAPEEVSEARRENKR) is disordered. ATP contacts are provided by residues 677–684 (GETGTGKT) and 1084–1091 (GETSVGKT). T1177 is modified (phosphothreonine). 1390 to 1397 (GDTGCGKT) is a binding site for ATP. K1683 is modified (N6-acetyllysine). AAA-ATPase protomer stretches follow at residues 1738-1995 (RLLR…AVFK) and 2053-2313 (MKCV…IYIS). ATP-binding positions include 1753-1760 (GSPGVGKT) and 2066-2073 (GPASVGKT). The residue at position 1754 (S1754) is a Phosphoserine. Residues 2418 to 4691 (SLRAHETWGD…EGEGMKDVSD (2274 aa)) are linker. Residues 3989 to 4008 (LVESDKEEQPDFLPRPTDGA) form a disordered region. T4212 is subject to Phosphothreonine. At S4538 the chain carries Phosphoserine. Disordered regions lie at residues 4669 to 4688 (ATEF…GMKD) and 4700 to 5260 (EDTF…SRES). Over residues 4702-4724 (TFQKGQEKDKEDPDSKSDIKGED) the composition is skewed to basic and acidic residues. Residues 4741 to 4757 (ELEEQEEDDEKSDSEGG) show a composition bias toward acidic residues. 2 positions are modified to phosphoserine: S4752 and S4754. Positions 4758-4780 (DLDKHMGDLNGEEADKLDERLWG) are enriched in basic and acidic residues. Acidic residues predominate over residues 4781–4794 (DDDEEEDEEEEDNK). Over residues 4822 to 4834 (NKDKSQQDKKEEK) the composition is skewed to basic and acidic residues. Positions 4835–4844 (EEAEADDGGQ) are enriched in acidic residues. The span at 4845–4855 (GEDKINEQIDE) shows a compositional bias: basic and acidic residues. The segment covering 4877–4888 (EALDLPDDLNLD) has biased composition (acidic residues). The residue at position 4889 (S4889) is a Phosphoserine. Over residues 4896-4908 (EDTDNEEGEEENP) the composition is skewed to acidic residues. T4898 bears the Phosphothreonine mark. Residues 4909 to 4928 (LEIKEKPEEAGHEAEERGET) are compositionally biased toward basic and acidic residues. S4937 and S4946 each carry phosphoserine. Over residues 4940–4966 (EPEEGPSEDDKAEGEEEMDTGADDQDG) the composition is skewed to acidic residues. The segment covering 4968–4989 (AAQHPEEHSEEQQQSVEEKDKE) has biased composition (basic and acidic residues). Positions 5007–5021 (QEEEEREDSDTEEQV) are enriched in acidic residues. Residue S5015 is modified to Phosphoserine. Polar residues predominate over residues 5033–5046 (CGQTGVENMQNTQA). Positions 5054 to 5064 (PEKEQGKEEHG) are enriched in basic and acidic residues. The segment covering 5088 to 5101 (KHTRKNTQSFKRKP) has biased composition (basic residues). Residues 5105-5115 (DNERSMGDHNE) are compositionally biased toward basic and acidic residues. Residues 5132–5141 (QGPAQQPQAQ) show a composition bias toward low complexity. The span at 5181-5197 (QEEEEIEDTLMDTEEQE) shows a compositional bias: acidic residues. 2 stretches are compositionally biased toward basic and acidic residues: residues 5198–5213 (EFKA…EEIK) and 5233–5260 (KTEE…SRES). Residues 5384–5583 (QICLAIDDSS…ALPETLSDAL (200 aa)) form the VWFA domain.

This sequence belongs to the midasin family. In terms of assembly, associates with pre-60S ribosomes in the nucleoplasm. Interacts (via its hexameric AAA ATPase ring) with the PELP1 complex (via PELP1); the interaction is regulated by SUMO conjugation of PELP1 and is crucial for recruitment of MDN1 to the pre-ribosomal particle. Interacts (via VWFA/MIDAS domain) with WDR12 (via UBL domain). Interacts (via VWFA/MIDAS domain) with NLE1 (via UBL domain).

It is found in the nucleus. Its subcellular location is the nucleolus. The protein localises to the nucleoplasm. It localises to the cytoplasm. Functionally, nuclear chaperone required for maturation and nuclear export of pre-60S ribosome subunits. Functions at successive maturation steps to remove ribosomal factors at critical transition points, first driving the exit of early pre-60S particles from the nucleolus and then driving late pre-60S particles from the nucleus. At an early stage in 60S maturation, mediates the dissociation of the PeBoW complex (PES1-BOP1-WDR12) from early pre-60S particles, rendering them competent for export from the nucleolus to the nucleoplasm. Subsequently recruited to the nucleoplasmic particles through interaction with SUMO-conjugated PELP1 complex. This binding is only possible if the 5S RNP at the central protuberance has undergone the rotation to complete its maturation. The polypeptide is Midasin (MDN1) (Homo sapiens (Human)).